The sequence spans 396 residues: GTPase Obg (396 aa).

The region spanning 1 to 159 (MKFVDEASIY…RTLKLEMKVL (159 aa)) is the Obg domain. Residues 120–146 (GGHHGLGNTRFKSSTNRAPRQTTKGTV) are disordered. A compositionally biased stretch (polar residues) spans 129 to 144 (RFKSSTNRAPRQTTKG). Residues 160–333 (ADVGLLGLPN…LCLDLMTALD (174 aa)) enclose the OBG-type G domain. GTP-binding positions include 166–173 (GLPNAGKS), 191–195 (FTTLV), 213–216 (DIPG), 283–286 (NKTD), and 314–316 (SAI). Mg(2+) contacts are provided by S173 and T193.

The protein belongs to the TRAFAC class OBG-HflX-like GTPase superfamily. OBG GTPase family. Monomer. Requires Mg(2+) as cofactor.

The protein resides in the cytoplasm. Its function is as follows. An essential GTPase which binds GTP, GDP and possibly (p)ppGpp with moderate affinity, with high nucleotide exchange rates and a fairly low GTP hydrolysis rate. Plays a role in control of the cell cycle, stress response, ribosome biogenesis and in those bacteria that undergo differentiation, in morphogenesis control. This chain is GTPase Obg, found in Marinomonas sp. (strain MWYL1).